A 194-amino-acid polypeptide reads, in one-letter code: Chromophore lyase CpcT/CpeT 1 (194 aa).

This sequence belongs to the CpcT/CpeT biliprotein lyase family.

In terms of biological role, covalently attaches a chromophore to Cys residue(s) of phycobiliproteins. The polypeptide is Chromophore lyase CpcT/CpeT 1 (Microcystis aeruginosa (strain NIES-843 / IAM M-2473)).